The following is a 178-amino-acid chain: Caveolin-1 (178 aa).

Ser2 carries the post-translational modification N-acetylserine. Phosphoserine is present on Ser2. The tract at residues 2 to 94 (SGGKYVDSEG…WKASFTTFTV (93 aa)) is required for homooligomerization. The Cytoplasmic segment spans residues 2–104 (SGGKYVDSEG…TKYWFYRLLS (103 aa)). At Lys5 the chain carries N6-acetyllysine; alternate. A Glycyl lysine isopeptide (Lys-Gly) (interchain with G-Cter in ubiquitin); alternate cross-link involves residue Lys5. Tyr6 bears the Phosphotyrosine mark. Ser9 is subject to Phosphoserine. Tyr14 carries the phosphotyrosine; by ABL1 modification. Tyr25 is subject to Phosphotyrosine. Glycyl lysine isopeptide (Lys-Gly) (interchain with G-Cter in ubiquitin) cross-links involve residues Lys26, Lys30, Lys39, Lys47, and Lys57. The interval 82-94 (DGIWKASFTTFTV) is interaction with CAVIN3. Positions 105-125 (ALFGIPMALIWGIYFAILSFL) form an intramembrane region, helical. The Cytoplasmic segment spans residues 126–178 (HIWAVVPCIKSFLIEIQCISRVYSIYVHTFCDPLFEAIGKIFSNIRINMQKEI). Residues 131 to 142 (VPCIKSFLIEIQ) form an interacts with SPRY1, SPRY2, SPRY3 and SPRY4 region. 3 S-palmitoyl cysteine lipidation sites follow: Cys133, Cys143, and Cys156. An interacts with SPRY1, SPRY2, and SPRY4 region spans residues 149 to 160 (SIYVHTFCDPLF). The tract at residues 167-178 (FSNIRINMQKEI) is interacts with SPRY1, SPRY2, SPRY3 and SPRY4.

It belongs to the caveolin family. As to quaternary structure, homooligomer. Interacts with GLIPR2. Interacts with NOSTRIN. Interacts with SNAP25 and STX1A. Interacts (via the N-terminus) with DPP4; the interaction is direct. Interacts with CTNNB1, CDH1 and JUP. Interacts with PACSIN2; this interaction induces membrane tubulation. Interacts with SLC7A9. Interacts with BMX and BTK. Interacts with TGFBR1. Interacts with CAVIN3 (via leucine-zipper domain) in a cholesterol-sensitive manner. Interacts with CAVIN1. Interacts with EHD2 in a cholesterol-dependent manner. Forms a ternary complex with UBXN6 and VCP; mediates CAV1 targeting to lysosomes for degradation. Interacts with ABCG1; this interaction regulates ABCG1-mediated cholesterol efflux. Interacts with NEU3; this interaction enhances NEU3 sialidase activity within caveola. Interacts (via C-terminus) with SPRY1, SPRY2 (via C-terminus), SPRY3, and SPRY4. Interacts with IGFBP5; this interaction allows trafficking of IGFBP5 from the plasma membrane to the nucleus. Phosphorylated at Tyr-14 by ABL1 in response to oxidative stress. Post-translationally, ubiquitinated. Undergo monoubiquitination and multi- and/or polyubiquitination. Monoubiquitination of N-terminal lysines promotes integration in a ternary complex with UBXN6 and VCP which promotes oligomeric CAV1 targeting to lysosomes for degradation. Ubiquitinated by ZNRF1; leading to degradation and modulation of the TLR4-mediated immune response.

The protein resides in the golgi apparatus membrane. It is found in the cell membrane. Its subcellular location is the membrane. The protein localises to the caveola. It localises to the membrane raft. Functionally, may act as a scaffolding protein within caveolar membranes. Forms a stable heterooligomeric complex with CAV2 that targets to lipid rafts and drives caveolae formation. Mediates the recruitment of CAVIN proteins (CAVIN1/2/3/4) to the caveolae. Interacts directly with G-protein alpha subunits and can functionally regulate their activity. Involved in the costimulatory signal essential for T-cell receptor (TCR)-mediated T-cell activation. Its binding to DPP4 induces T-cell proliferation and NF-kappa-B activation in a T-cell receptor/CD3-dependent manner. Recruits CTNNB1 to caveolar membranes and may regulate CTNNB1-mediated signaling through the Wnt pathway. Negatively regulates TGFB1-mediated activation of SMAD2/3 by mediating the internalization of TGFBR1 from membrane rafts leading to its subsequent degradation. Binds 20(S)-hydroxycholesterol (20(S)-OHC). The sequence is that of Caveolin-1 (CAV1) from Muntiacus reevesi (Reeves' muntjac).